The chain runs to 823 residues: ATM interactor (823 aa).

Positions Gly-28 to Glu-67 are disordered. Residues Pro-49–Ala-59 are compositionally biased toward low complexity. A C2H2-type 1 zinc finger spans residues Ile-84–His-109. Residues His-165–Ala-184 form a C2H2-type 2; degenerate zinc finger. Residues His-214–Ser-225 are compositionally biased toward basic and acidic residues. Disordered regions lie at residues His-214–Ala-234, Glu-268–Arg-289, and Arg-610–Ile-634. Residues Pro-223 to Gln-442 form a required for formation of RAD51 foci region. Polar residues-rich tracts occupy residues Cys-275 to Thr-286 and Leu-613 to Ala-629.

In terms of assembly, interacts via its C-terminus with ATM. Interacts with DYNLL1; this interaction inhibits ATMIN transcriptional activity and hence may play a role in a feedback loop whereby DYNLL1 inhibits transactivation of its own promoter by ATMIN. As to expression, ubiquitously expressed in normal tissues and cancer cell lines with highest levels in placenta and skeletal muscle.

It localises to the nucleus. Transcription factor. Plays a crucial role in cell survival and RAD51 foci formation in response to methylating DNA damage. Involved in regulating the activity of ATM in the absence of DNA damage. May play a role in stabilizing ATM. Binds to the DYNLL1 promoter and activates its transcription. The protein is ATM interactor (ATMIN) of Homo sapiens (Human).